Consider the following 184-residue polypeptide: Protein GrpE (184 aa).

Residues 1-26 (MANEQNEQAQDIQNEQVEQSNEQTQA) are compositionally biased toward polar residues. Residues 1 to 34 (MANEQNEQAQDIQNEQVEQSNEQTQAEGVEQAND) are disordered.

Belongs to the GrpE family. As to quaternary structure, homodimer.

The protein resides in the cytoplasm. Functionally, participates actively in the response to hyperosmotic and heat shock by preventing the aggregation of stress-denatured proteins, in association with DnaK and GrpE. It is the nucleotide exchange factor for DnaK and may function as a thermosensor. Unfolded proteins bind initially to DnaJ; upon interaction with the DnaJ-bound protein, DnaK hydrolyzes its bound ATP, resulting in the formation of a stable complex. GrpE releases ADP from DnaK; ATP binding to DnaK triggers the release of the substrate protein, thus completing the reaction cycle. Several rounds of ATP-dependent interactions between DnaJ, DnaK and GrpE are required for fully efficient folding. The sequence is that of Protein GrpE from Acinetobacter baumannii (strain AB307-0294).